A 211-amino-acid polypeptide reads, in one-letter code: Large ribosomal subunit protein uL3 (211 aa).

The segment at 122-147 (AIKRHGQSRGPMAHGSRYHRRPGSMG) is disordered.

This sequence belongs to the universal ribosomal protein uL3 family. As to quaternary structure, part of the 50S ribosomal subunit. Forms a cluster with proteins L14 and L19.

Functionally, one of the primary rRNA binding proteins, it binds directly near the 3'-end of the 23S rRNA, where it nucleates assembly of the 50S subunit. This Geobacillus sp. (strain WCH70) protein is Large ribosomal subunit protein uL3.